Reading from the N-terminus, the 448-residue chain is Cysteine--tRNA ligase (448 aa).

Cys27 contacts Zn(2+). Positions 29–39 match the 'HIGH' region motif; that stretch reads PTVYNYIHVGN. Cys210, His235, and Glu239 together coordinate Zn(2+). Positions 267–271 match the 'KMSKS' region motif; that stretch reads KMSKS. Lys270 provides a ligand contact to ATP.

This sequence belongs to the class-I aminoacyl-tRNA synthetase family. Monomer. The cofactor is Zn(2+).

Its subcellular location is the cytoplasm. It carries out the reaction tRNA(Cys) + L-cysteine + ATP = L-cysteinyl-tRNA(Cys) + AMP + diphosphate. The polypeptide is Cysteine--tRNA ligase (Lactococcus lactis subsp. cremoris (strain SK11)).